Reading from the N-terminus, the 467-residue chain is Putative serine/threonine-protein kinase R400 (467 aa).

The Protein kinase domain occupies 99–467 (GVKLIYIKSG…STGQKPTKKV (369 aa)). ATP is bound by residues 105-113 (IKSGTTGHT) and lysine 129. The active-site Proton acceptor is the aspartate 272. Residues 443–467 (LFQQGNGSKQPVPKKSTGQKPTKKV) are disordered. Residues 458–467 (STGQKPTKKV) show a composition bias toward polar residues.

Belongs to the protein kinase superfamily. Ser/Thr protein kinase family.

Its subcellular location is the virion. It catalyses the reaction L-seryl-[protein] + ATP = O-phospho-L-seryl-[protein] + ADP + H(+). The enzyme catalyses L-threonyl-[protein] + ATP = O-phospho-L-threonyl-[protein] + ADP + H(+). This chain is Putative serine/threonine-protein kinase R400, found in Acanthamoeba polyphaga mimivirus (APMV).